We begin with the raw amino-acid sequence, 140 residues long: Calcium-binding protein B (140 aa).

EF-hand domains lie at 38–73 (ATLS…INQP) and 74–109 (KTYL…KTSS). Ca(2+) contacts are provided by aspartate 51, asparagine 53, serine 55, aspartate 57, and glutamate 62.

The chain is Calcium-binding protein B (cbpB) from Dictyostelium discoideum (Social amoeba).